A 172-amino-acid polypeptide reads, in one-letter code: C-phycocyanin beta chain (172 aa).

N72 carries the N4-methylasparagine modification. Residues C82 and C153 each coordinate (2R,3E)-phycocyanobilin.

It belongs to the phycobiliprotein family. As to quaternary structure, heterodimer of an alpha and a beta subunit, which further assembles into trimers and the trimers into hexamers. The basic functional unit of phycobiliproteins is a ring-shaped hexamer formed from two back-to-back trimers contacting via the alpha chain subunits. The trimers are composed of alpha/beta subunit heterodimers arranged around a three-fold axis of symmetry. The phycoerythrins also contain a gamma subunit which is located in the center of the hexamer. Post-translationally, contains two covalently linked phycocyanobilin chromophores.

The protein resides in the plastid. It localises to the cyanelle thylakoid membrane. Its function is as follows. Light-harvesting photosynthetic bile pigment-protein from the phycobiliprotein complex (phycobilisome, PBS). Phycocyanin is the major phycobiliprotein in the PBS rod. This is C-phycocyanin beta chain (cpcB) from Cyanophora paradoxa.